A 452-amino-acid polypeptide reads, in one-letter code: Cytoplasmic tRNA 2-thiolation protein 2 (452 aa).

Belongs to the CTU2/NCS2 family.

Its subcellular location is the cytoplasm. The protein operates within tRNA modification; 5-methoxycarbonylmethyl-2-thiouridine-tRNA biosynthesis. Functionally, plays a central role in 2-thiolation of mcm(5)S(2)U at tRNA wobble positions of tRNA(Lys), tRNA(Glu) and tRNA(Gln). May act by forming a heterodimer with NCS6 that ligates sulfur from thiocarboxylated URM1 onto the uridine of tRNAs at wobble position. Prior mcm(5) tRNA modification by the elongator complex is required for 2-thiolation. May also be involved in protein urmylation. This Candida albicans (strain SC5314 / ATCC MYA-2876) (Yeast) protein is Cytoplasmic tRNA 2-thiolation protein 2.